A 389-amino-acid chain; its full sequence is MVNVEEIRNAQRAQGPATVLAIGTSTPSNCVDQSTYPDYYFRITNSEHKTELKEKFKRMCEKSMIKKRYMHLTEEILQENPNICAYMAPSLDARQNIVVVEVPKLGKEAAQKAIKEWGQSKSKITHLVFCTTSGVDMPGADYQLTKLLGLRSSVKRLMMYQQGCFAGGTVLRLAKDLAENNKGARVLVVCSEITAVTFRGPSESHLDSLVGQALFGDGAAAIIVGSDPIPEIERPLFELVSAAQTLLPDSHGAIDGHLREVGLTFHLLKDVPGLISKNIGKALDEAFQPLGISDWNSIFWIAHPGGPAILDQVEEKLGLKPEKLRATRHVLSEYGNMSSACVLFILDEMRKASARDGLSTTGEGLEWGVLFGFGPGLTVETVVLHSVNV.

Cysteine 164 is an active-site residue.

The protein belongs to the thiolase-like superfamily. Chalcone/stilbene synthases family.

The catalysed reaction is (E)-4-coumaroyl-CoA + 3 malonyl-CoA + 3 H(+) = 2',4,4',6'-tetrahydroxychalcone + 3 CO2 + 4 CoA. It functions in the pathway secondary metabolite biosynthesis; flavonoid biosynthesis. The primary product of this enzyme is 4,2',4',6'-tetrahydroxychalcone (also termed naringenin-chalcone or chalcone) which can under specific conditions spontaneously isomerize into naringenin. The polypeptide is Chalcone synthase (CHS) (Catharanthus roseus (Madagascar periwinkle)).